The primary structure comprises 285 residues: 2-dehydro-3-deoxyphosphooctonate aldolase (285 aa).

The protein belongs to the KdsA family.

It is found in the cytoplasm. The catalysed reaction is D-arabinose 5-phosphate + phosphoenolpyruvate + H2O = 3-deoxy-alpha-D-manno-2-octulosonate-8-phosphate + phosphate. Its pathway is carbohydrate biosynthesis; 3-deoxy-D-manno-octulosonate biosynthesis; 3-deoxy-D-manno-octulosonate from D-ribulose 5-phosphate: step 2/3. It participates in bacterial outer membrane biogenesis; lipopolysaccharide biosynthesis. In Bordetella bronchiseptica (strain ATCC BAA-588 / NCTC 13252 / RB50) (Alcaligenes bronchisepticus), this protein is 2-dehydro-3-deoxyphosphooctonate aldolase.